The primary structure comprises 731 residues: DNA gyrase subunit B, chloroplastic/mitochondrial (731 aa).

The region spanning 512–619 (AEIFIVEGDS…RYQRALFEEG (108 aa)) is the Toprim domain. Residues Glu-518, Asp-592, and Asp-594 each contribute to the Mg(2+) site.

Belongs to the type II topoisomerase GyrB family. As to quaternary structure, made up of two chains. The A chain is responsible for DNA breakage and rejoining; the B chain catalyzes ATP hydrolysis. The cofactor is Mg(2+). Mn(2+) serves as cofactor. It depends on Ca(2+) as a cofactor. As to expression, ubiquitous.

The protein resides in the plastid. The protein localises to the chloroplast. It is found in the mitochondrion. It carries out the reaction ATP-dependent breakage, passage and rejoining of double-stranded DNA.. Functionally, seems to play a critical role in chloroplast nucleoid partitioning by regulating DNA topology. A type II topoisomerase that negatively supercoils closed circular double-stranded DNA in an ATP-dependent manner. The polypeptide is DNA gyrase subunit B, chloroplastic/mitochondrial (GYRB) (Nicotiana benthamiana).